Here is a 181-residue protein sequence, read N- to C-terminus: Oligoribonuclease (181 aa).

The region spanning 8–171 is the Exonuclease domain; sequence LIWVDLEMTG…DDIHDSIAEL (164 aa). Y129 is a catalytic residue.

It belongs to the oligoribonuclease family.

Its subcellular location is the cytoplasm. Its function is as follows. 3'-to-5' exoribonuclease specific for small oligoribonucleotides. The chain is Oligoribonuclease from Photobacterium profundum (strain SS9).